Here is a 507-residue protein sequence, read N- to C-terminus: Cysteine--tRNA ligase (507 aa).

Cys-29 is a binding site for Zn(2+). A 'HIGH' region motif is present at residues 31–41 (PTVYDVPHIGN). Positions 207, 232, and 236 each coordinate Zn(2+). The short motif at 265-269 (KMSKS) is the 'KMSKS' region element. Lys-268 is an ATP binding site.

This sequence belongs to the class-I aminoacyl-tRNA synthetase family. As to quaternary structure, monomer. Requires Zn(2+) as cofactor.

The protein resides in the cytoplasm. The enzyme catalyses tRNA(Cys) + L-cysteine + ATP = L-cysteinyl-tRNA(Cys) + AMP + diphosphate. This Neorickettsia sennetsu (strain ATCC VR-367 / Miyayama) (Ehrlichia sennetsu) protein is Cysteine--tRNA ligase.